Here is a 497-residue protein sequence, read N- to C-terminus: tRNA-2-methylthio-N(6)-dimethylallyladenosine synthase (497 aa).

Residues methionine 1–glycine 48 are disordered. Low complexity predominate over residues proline 18–threonine 28. The MTTase N-terminal domain maps to glycine 48 to glutamate 165. [4Fe-4S] cluster-binding residues include cysteine 57, cysteine 94, cysteine 128, cysteine 202, cysteine 206, and cysteine 209. The 243-residue stretch at arginine 188–aspartate 430 folds into the Radical SAM core domain. In terms of domain architecture, TRAM spans lysine 433 to threonine 496.

This sequence belongs to the methylthiotransferase family. MiaB subfamily. In terms of assembly, monomer. It depends on [4Fe-4S] cluster as a cofactor.

The protein localises to the cytoplasm. The enzyme catalyses N(6)-dimethylallyladenosine(37) in tRNA + (sulfur carrier)-SH + AH2 + 2 S-adenosyl-L-methionine = 2-methylsulfanyl-N(6)-dimethylallyladenosine(37) in tRNA + (sulfur carrier)-H + 5'-deoxyadenosine + L-methionine + A + S-adenosyl-L-homocysteine + 2 H(+). Functionally, catalyzes the methylthiolation of N6-(dimethylallyl)adenosine (i(6)A), leading to the formation of 2-methylthio-N6-(dimethylallyl)adenosine (ms(2)i(6)A) at position 37 in tRNAs that read codons beginning with uridine. The chain is tRNA-2-methylthio-N(6)-dimethylallyladenosine synthase from Xylella fastidiosa (strain M23).